A 190-amino-acid chain; its full sequence is dCTP deaminase, dUMP-forming (190 aa).

DCTP is bound by residues 101–106, Asp-119, 127–129, Gln-148, Tyr-162, and Gln-174; these read KSSLGR and TLE. The Proton donor/acceptor role is filled by Glu-129. Positions 161-190 are disordered; sequence PYGSSSVGSKYQGQRGPTPSRSYQNFVKND. The segment covering 163–190 has biased composition (polar residues); the sequence is GSSSVGSKYQGQRGPTPSRSYQNFVKND.

Belongs to the dCTP deaminase family. Homotrimer.

The catalysed reaction is dCTP + 2 H2O = dUMP + NH4(+) + diphosphate. It participates in pyrimidine metabolism; dUMP biosynthesis; dUMP from dCTP: step 1/1. In terms of biological role, bifunctional enzyme that catalyzes both the deamination of dCTP to dUTP and the hydrolysis of dUTP to dUMP without releasing the toxic dUTP intermediate. This chain is dCTP deaminase, dUMP-forming, found in Mycolicibacterium vanbaalenii (strain DSM 7251 / JCM 13017 / BCRC 16820 / KCTC 9966 / NRRL B-24157 / PYR-1) (Mycobacterium vanbaalenii).